Here is a 100-residue protein sequence, read N- to C-terminus: Apolipoprotein C-II (100 aa).

A signal peptide spans 1 to 22; it reads MGSRFLLALFLILLVLGCEVQA. Positions 66–74 are lipid binding; that stretch reads SVDEKLRDM. The tract at residues 78-100 is lipoprotein lipase cofactor; it reads SSAAMTTYASIFTDQILTLLKGE.

This sequence belongs to the apolipoprotein C2 family. Proapolipoprotein C-II is synthesized as a sialic acid containing glycoprotein which is subsequently desialylated prior to its proteolytic processing. Post-translationally, proapolipoprotein C-II, the major form found in plasma undergoes proteolytic cleavage of its N-terminal hexapeptide to generate the mature form apolipoprotein C-II, which occurs as the minor form in plasma.

It localises to the secreted. Component of chylomicrons, very low-density lipoproteins (VLDL), low-density lipoproteins (LDL), and high-density lipoproteins (HDL) in plasma. Plays an important role in lipoprotein metabolism as an activator of lipoprotein lipase. The protein is Apolipoprotein C-II (APOC2) of Microtus ochrogaster (Prairie vole).